Here is a 411-residue protein sequence, read N- to C-terminus: uncharacterized protein (411 aa).

The signal sequence occupies residues 1-21 (MHSRILLLLLMFAFNVGLINC). The region spanning 28–67 (PQSNCKIRCENGGMCVFDLERPDFHSCICLLGVYTGDRCQ) is the EGF-like domain. Intrachain disulfides connect Cys-32–Cys-42, Cys-36–Cys-54, and Cys-56–Cys-66. Polar residues predominate over residues 78 to 97 (TATSDETSHPMNIQHQQSQA). Disordered stretches follow at residues 78–312 (TATS…EPIR) and 337–375 (HPIEEDEYWDETSKKTDEDSWTAENEGTKKTEEADEYGM). Basic and acidic residues predominate over residues 100-230 (DDARRRDDER…VEKELNDKRT (131 aa)). Over residues 237 to 266 (FEYEGGDEEYPQVAEKEDEYDEGYETDNTE) the composition is skewed to acidic residues. Residues 267 to 276 (DVTITTTKTT) are compositionally biased toward low complexity.

This is an uncharacterized protein from Caenorhabditis elegans.